We begin with the raw amino-acid sequence, 532 residues long: Protoporphyrinogen oxidase (532 aa).

Residues 9 to 14 (GSGISG), Ile-289, and 511 to 513 (VGI) contribute to the FAD site.

Belongs to the protoporphyrinogen/coproporphyrinogen oxidase family. Protoporphyrinogen oxidase subfamily. It depends on FAD as a cofactor.

The protein localises to the mitochondrion. The enzyme catalyses protoporphyrinogen IX + 3 O2 = protoporphyrin IX + 3 H2O2. It participates in porphyrin-containing compound metabolism; protoporphyrin-IX biosynthesis; protoporphyrin-IX from protoporphyrinogen-IX: step 1/1. Catalyzes the 6-electron oxidation of protoporphyrinogen-IX to form protoporphyrin-IX. The sequence is that of Protoporphyrinogen oxidase (ppox) from Dictyostelium discoideum (Social amoeba).